A 178-amino-acid polypeptide reads, in one-letter code: Endothelin-2 (178 aa).

Residues 1–24 (MPAPGVHHPNTASPFLKTVAAGKG) form the signal peptide. Residues 25–46 (QVAAAPEHPAPSARARGSHLRP) constitute a propeptide that is removed on maturation. Intrachain disulfides connect Cys-49–Cys-63 and Cys-51–Cys-59. The propeptide occupies 70 to 178 (VNTPGQTAPY…RPTHPRRRKR (109 aa)). Residues 96–111 (CECSSGGDPACATFCH) are endothelin-like. Positions 156–178 (RFPRRPQEAGRQLRPTHPRRRKR) are disordered. A compositionally biased stretch (basic residues) spans 169–178 (RPTHPRRRKR).

Belongs to the endothelin/sarafotoxin family.

It is found in the secreted. In terms of biological role, endothelins are endothelium-derived vasoconstrictor peptides. In Canis lupus familiaris (Dog), this protein is Endothelin-2 (EDN2).